We begin with the raw amino-acid sequence, 136 residues long: ATP synthase epsilon chain (136 aa).

This sequence belongs to the ATPase epsilon chain family. As to quaternary structure, F-type ATPases have 2 components, CF(1) - the catalytic core - and CF(0) - the membrane proton channel. CF(1) has five subunits: alpha(3), beta(3), gamma(1), delta(1), epsilon(1). CF(0) has three main subunits: a, b and c.

The protein resides in the cell membrane. Its function is as follows. Produces ATP from ADP in the presence of a proton gradient across the membrane. In Exiguobacterium sp. (strain ATCC BAA-1283 / AT1b), this protein is ATP synthase epsilon chain.